The sequence spans 265 residues: MIKWPWKAQEITQNEDWPWDDALAIPLLVNLTAQEQARLIALAERFLQQKRLVALQGFELDSLKSARIALIFCLPILELGIEWLDGFHEVLIYPAPFVVDDEWEDDIGLVHSQRVVQSGQSWQQGPIILNWLDIQDSFDASGFNLIIHEVAHKLDMRNGDRASGIPFIPLRDVAGWEHDLHAAMNNIQDEIDLVGESAASIDAYAATDPAECFAVLSEYFFSAPELFAPRFPALWQRFCQFYRQDPSQRLRVSAAEGDYGEESEH.

Zn(2+) contacts are provided by His-111, His-148, His-152, and Glu-211.

Belongs to the MtfA family. In terms of assembly, interacts with Mlc. The cofactor is Zn(2+).

It is found in the cytoplasm. Functionally, involved in the modulation of the activity of the glucose-phosphotransferase system (glucose-PTS). Interacts with the transcriptional repressor Mlc, preventing its interaction with DNA and leading to the modulation of expression of genes regulated by Mlc, including ptsG, which encodes the PTS system glucose-specific EIICB component. Its function is as follows. Shows zinc-dependent metallopeptidase activity. The protein is Mlc titration factor A of Salmonella enteritidis PT4 (strain P125109).